A 473-amino-acid chain; its full sequence is MAAYVSPCLTPPDSRVLTVLRKSVLPDHHLGTRVGCLRMSEGTTKRYRVVASHKYESSSIRNSLNSHSTSHFQSQDSFLNLHPEISMLNPRKETSSVPITEDLDELSTPNTYNEARIKVIGVGGGGSNAVNRMIESEMIGVEFWIVNTDIQAMRISPVFPDNRLQIGKELTRGLGAGGNPEIGMNAATESKEAIQEALYGSDMVFVTAGMGGGTGTGGAPIIAGVAKAMGILTVGIVTTPFSFEGRRRALQAQEGIAALRDNVDTLIVIPNDKLLAAVSQSTPVTEAFNLADDILRQGVRGISDIITIPGLVNVDFADVRAIMANAGSSLMGIGTATGKTRARDAALNAIQSPLLDIGIERATGIVWNITGGSDLTLFEVNAAAEVIYDLVDPTANLIFGAVVDPSYSGQISITLIATGFKRQEEGEGRPLQATQADASMGATRRPSSSFTEGSSIEIPEFLKKKGRSRYPRL.

Residues 124 to 128 (GGGSN), 213 to 215 (GTG), E244, and R248 contribute to the GTP site. At T282 the chain carries Phosphothreonine; by PGK1. Position 292 (D292) interacts with GTP. Residues 424-455 (EEGEGRPLQATQADASMGATRRPSSSFTEGSS) form a disordered region. Over residues 445 to 454 (RPSSSFTEGS) the composition is skewed to polar residues.

Belongs to the FtsZ family. In terms of assembly, aggregates to form a contractile ring-like structure; contraction of the ring was accompanied by an increase in the filament turnover rate. Self-interacts and binds to FTSZ1 in heteropolymers to form two morphologically distinct types of filaments, termed type-I (smooth filaments) and -II (rough filaments), in a GTP-dependent manner. Part of a complex made of ARC3, ARC6, FTSZ1 and FTSZ2. Interacts (via C-terminus) with ARC6. Interacts with CDP1/PARC6. Binds to PGK1. Phosphorylation at Thr-282 is required for the formation of contractile ring at the chloroplast midpoint.

It is found in the plastid. Its subcellular location is the chloroplast stroma. The protein resides in the chloroplast thylakoid membrane. Exhibits GTPase activity. Component of the plastid division machinery that forms a contractile ring at the division site. Contributes to plastid division in the vegetative shoot apex, at the shoot apical meristem (SAM) where the proplastid-to-chloroplast transition takes place. The protein is Cell division protein FtsZ homolog 2-2, chloroplastic of Arabidopsis thaliana (Mouse-ear cress).